The sequence spans 425 residues: Histidine--tRNA ligase (425 aa).

It belongs to the class-II aminoacyl-tRNA synthetase family. In terms of assembly, homodimer.

It is found in the cytoplasm. The catalysed reaction is tRNA(His) + L-histidine + ATP = L-histidyl-tRNA(His) + AMP + diphosphate + H(+). This chain is Histidine--tRNA ligase, found in Shewanella sp. (strain MR-7).